A 127-amino-acid polypeptide reads, in one-letter code: Fluoride-specific ion channel FluC (127 aa).

A run of 4 helical transmembrane segments spans residues 4–24 (IMLA…WLGL), 35–55 (VGTL…LAWF), 71–91 (TGLC…VFLL), and 101–121 (LNVA…FWLF). Gly-75 and Thr-78 together coordinate Na(+).

It belongs to the fluoride channel Fluc/FEX (TC 1.A.43) family.

The protein resides in the cell inner membrane. It catalyses the reaction fluoride(in) = fluoride(out). Na(+) is not transported, but it plays an essential structural role and its presence is essential for fluoride channel function. Its function is as follows. Fluoride-specific ion channel. Important for reducing fluoride concentration in the cell, thus reducing its toxicity. This is Fluoride-specific ion channel FluC from Cronobacter sakazakii (strain ATCC BAA-894) (Enterobacter sakazakii).